We begin with the raw amino-acid sequence, 86 residues long: Toxin Aam3 (86 aa).

An N-terminal signal peptide occupies residues 1–19 (MNYLVMISLALLFMIGVES). The LCN-type CS-alpha/beta domain occupies 21–85 (RDGYIAQPNN…PIKIIGQKCT (65 aa)). 4 disulfides stabilise this stretch: C31-C84, C35-C56, C42-C66, and C46-C68.

The protein belongs to the long (4 C-C) scorpion toxin superfamily. Sodium channel inhibitor family. Alpha subfamily. The C-terminal basic residue is removed by a carboxypeptidase. In terms of tissue distribution, expressed by the venom gland.

The protein localises to the secreted. Alpha toxins bind voltage-independently at site-3 of sodium channels (Nav) and inhibit the inactivation of the activated channels, thereby blocking neuronal transmission. This chain is Toxin Aam3, found in Androctonus amoreuxi (African fattail scorpion).